Consider the following 106-residue polypeptide: Large ribosomal subunit protein uL24 (106 aa).

The protein belongs to the universal ribosomal protein uL24 family. As to quaternary structure, part of the 50S ribosomal subunit.

In terms of biological role, one of two assembly initiator proteins, it binds directly to the 5'-end of the 23S rRNA, where it nucleates assembly of the 50S subunit. One of the proteins that surrounds the polypeptide exit tunnel on the outside of the subunit. The polypeptide is Large ribosomal subunit protein uL24 (Albidiferax ferrireducens (strain ATCC BAA-621 / DSM 15236 / T118) (Rhodoferax ferrireducens)).